Reading from the N-terminus, the 192-residue chain is Probable nicotinate-nucleotide adenylyltransferase (192 aa).

This sequence belongs to the NadD family.

The catalysed reaction is nicotinate beta-D-ribonucleotide + ATP + H(+) = deamido-NAD(+) + diphosphate. Its pathway is cofactor biosynthesis; NAD(+) biosynthesis; deamido-NAD(+) from nicotinate D-ribonucleotide: step 1/1. Catalyzes the reversible adenylation of nicotinate mononucleotide (NaMN) to nicotinic acid adenine dinucleotide (NaAD). This is Probable nicotinate-nucleotide adenylyltransferase from Rhizobium etli (strain CIAT 652).